The following is a 142-amino-acid chain: Hemoglobin subunit alpha-2 (142 aa).

The Globin domain occupies 2 to 142 (VLSAADKSNV…VSTVLTSKYR (141 aa)). Histidine 59 is a binding site for O2. Histidine 88 serves as a coordination point for heme b.

The protein belongs to the globin family. As to quaternary structure, heterotetramer of two alpha chains and two beta chains.

Functionally, involved in oxygen transport from the lung to the various peripheral tissues. Its function is as follows. Hemopressin acts as an antagonist peptide of the cannabinoid receptor CNR1. Hemopressin-binding efficiently blocks cannabinoid receptor CNR1 and subsequent signaling. In Capra hircus (Goat), this protein is Hemoglobin subunit alpha-2 (HBA2).